The following is a 344-amino-acid chain: Cyanuric acid amidohydrolase (344 aa).

Residues 1–91 are RU A; that stretch reads MTVVDIVKRT…ASAFVGTDRP (91 aa). Substrate-binding positions include arginine 51 and 71 to 72; that span reads SG. The tract at residues 97-232 is RU B; that stretch reads ALVAAVGRTA…CHILVLGNSP (136 aa). Lysine 146 is an active-site residue. Substrate is bound by residues arginine 178 and 215–216; that span reads SS. The Nucleophile role is filled by serine 215. An RU C region spans residues 238–344; sequence LRAVHGVMRD…PVTVVYRVAS (107 aa). Residue glutamate 276 coordinates Mg(2+). Substrate contacts are provided by residues arginine 303 and 322 to 323; that span reads SG. Alanine 325, glutamine 328, glycine 329, proline 330, and glycine 333 together coordinate Mg(2+).

The protein belongs to the cyclic amide hydrolase (CyAH) family. In terms of assembly, homotetramer.

It catalyses the reaction cyanurate + H2O = 1-carboxybiuret + H(+). Its pathway is xenobiotic degradation; atrazine degradation; biuret from cyanurate: step 1/1. Inhibited by barbituric acid. Responsible for the hydrolysis of cyanuric acid, an intermediate formed during catabolism of s-triazine based compounds in herbicides such as atrazine and polymers such as melamine. Catalyzes the hydrolytic opening of the s-triazine ring of cyanuric acid (2,4,6-trihydroxy-s-triazine) to yield carbon dioxide and carboxybiuret, which spontaneously decarboxylates to biuret. The polypeptide is Cyanuric acid amidohydrolase (Pseudonocardia dioxanivorans (strain ATCC 55486 / DSM 44775 / JCM 13855 / CB1190)).